A 281-amino-acid polypeptide reads, in one-letter code: NADPH-dependent 7-cyano-7-deazaguanine reductase (281 aa).

Residue 88–90 (VES) coordinates substrate. 90–91 (SK) is an NADPH binding site. The active-site Thioimide intermediate is cysteine 189. The active-site Proton donor is aspartate 196. Position 228-229 (228-229 (HE)) interacts with substrate. 257-258 (RG) is an NADPH binding site.

This sequence belongs to the GTP cyclohydrolase I family. QueF type 2 subfamily. Homodimer.

It localises to the cytoplasm. The catalysed reaction is 7-aminomethyl-7-carbaguanine + 2 NADP(+) = 7-cyano-7-deazaguanine + 2 NADPH + 3 H(+). It participates in tRNA modification; tRNA-queuosine biosynthesis. Its function is as follows. Catalyzes the NADPH-dependent reduction of 7-cyano-7-deazaguanine (preQ0) to 7-aminomethyl-7-deazaguanine (preQ1). This is NADPH-dependent 7-cyano-7-deazaguanine reductase from Klebsiella pneumoniae subsp. pneumoniae (strain ATCC 700721 / MGH 78578).